The primary structure comprises 387 residues: Succinate--CoA ligase [ADP-forming] subunit beta (387 aa).

Residues 9–236 enclose the ATP-grasp domain; that stretch reads KELFAKHNVP…KDATDPLELK (228 aa). ATP is bound by residues Lys-45, 52-54, Ser-94, and Glu-99; that span reads GRG. Residues Asn-191 and Asp-205 each contribute to the Mg(2+) site. Substrate-binding positions include Asn-256 and 318 to 320; that span reads GIT.

The protein belongs to the succinate/malate CoA ligase beta subunit family. Heterotetramer of two alpha and two beta subunits. Requires Mg(2+) as cofactor.

The catalysed reaction is succinate + ATP + CoA = succinyl-CoA + ADP + phosphate. The enzyme catalyses GTP + succinate + CoA = succinyl-CoA + GDP + phosphate. It functions in the pathway carbohydrate metabolism; tricarboxylic acid cycle; succinate from succinyl-CoA (ligase route): step 1/1. In terms of biological role, succinyl-CoA synthetase functions in the citric acid cycle (TCA), coupling the hydrolysis of succinyl-CoA to the synthesis of either ATP or GTP and thus represents the only step of substrate-level phosphorylation in the TCA. The beta subunit provides nucleotide specificity of the enzyme and binds the substrate succinate, while the binding sites for coenzyme A and phosphate are found in the alpha subunit. The sequence is that of Succinate--CoA ligase [ADP-forming] subunit beta from Mycolicibacterium vanbaalenii (strain DSM 7251 / JCM 13017 / BCRC 16820 / KCTC 9966 / NRRL B-24157 / PYR-1) (Mycobacterium vanbaalenii).